Here is a 257-residue protein sequence, read N- to C-terminus: RING-H2 finger protein ATL5 (257 aa).

A helical membrane pass occupies residues 28–48 (IMLASVIILFVAVILILCFHS). The RING-type; atypical zinc finger occupies 113 to 155 (CSVCLSEFEEDDEGRVLPKCGHVFHVDCIDTWFRSRSSCPLCR). The tract at residues 181–209 (EDTEAGSSSSSDESESSTPSSSSGSPVRF) is disordered. Low complexity predominate over residues 185–206 (AGSSSSSDESESSTPSSSSGSP).

This sequence belongs to the RING-type zinc finger family. ATL subfamily.

It is found in the membrane. It catalyses the reaction S-ubiquitinyl-[E2 ubiquitin-conjugating enzyme]-L-cysteine + [acceptor protein]-L-lysine = [E2 ubiquitin-conjugating enzyme]-L-cysteine + N(6)-ubiquitinyl-[acceptor protein]-L-lysine.. It participates in protein modification; protein ubiquitination. In Arabidopsis thaliana (Mouse-ear cress), this protein is RING-H2 finger protein ATL5 (ATL5).